A 114-amino-acid chain; its full sequence is Hydrogenase maturation factor HypA (114 aa).

His2 provides a ligand contact to Ni(2+). Zn(2+) contacts are provided by Cys73, Cys76, Cys89, and Cys92.

Belongs to the HypA/HybF family.

Involved in the maturation of [NiFe] hydrogenases. Required for nickel insertion into the metal center of the hydrogenase. This is Hydrogenase maturation factor HypA from Syntrophus aciditrophicus (strain SB).